A 208-amino-acid polypeptide reads, in one-letter code: Urease accessory protein UreG 1 (208 aa).

A GTP-binding site is contributed by 14–21 (GPVGSGKT).

Belongs to the SIMIBI class G3E GTPase family. UreG subfamily. As to quaternary structure, homodimer. UreD, UreF and UreG form a complex that acts as a GTP-hydrolysis-dependent molecular chaperone, activating the urease apoprotein by helping to assemble the nickel containing metallocenter of UreC. The UreE protein probably delivers the nickel.

Its subcellular location is the cytoplasm. Facilitates the functional incorporation of the urease nickel metallocenter. This process requires GTP hydrolysis, probably effectuated by UreG. This Brucella ovis (strain ATCC 25840 / 63/290 / NCTC 10512) protein is Urease accessory protein UreG 1.